The sequence spans 1371 residues: Perilipin-4 (1371 aa).

Residues 1-13 (MSAPDEGRRDPPK) are compositionally biased toward basic and acidic residues. A disordered region spans residues 1–22 (MSAPDEGRRDPPKPKGKTLGSF). A phosphoserine mark is found at S25 and S31. A disordered region spans residues 37-86 (ANAHSSARARPAADPTGAPAAEAAQPQAQVAAHPEQTAPWTEKELQPSEK). The segment covering 44 to 72 (RARPAADPTGAPAAEAAQPQAQVAAHPEQ) has biased composition (low complexity). Repeat copies occupy residues 109–141 (GVAS…VVSS), 142–174 (GVTG…TVST), 175–207 (GLTG…TVTT), 208–240 (GVMG…AVST), 241–273 (GLTG…TVCS), 274–306 (GVTG…TVCS), 307–339 (GVTG…TVCS), 340–372 (GVTG…TVCS), 373–405 (GVTG…TMST), 406–438 (GLTG…TVCS), 439–471 (GVTG…TVCS), 472–504 (GVTG…AVST), 505–537 (GLTG…TVCS), 538–570 (GVTS…TMST), 571–603 (GLTG…TVTT), 604–636 (GLVG…TIYS), 637–669 (GVTS…TFGS), 670–702 (GVTS…TVTT), 703–735 (GLMG…TVCS), 736–768 (GVTG…AVST), 769–801 (GLTG…AVCS), 802–834 (GVTG…TVCS), 835–867 (GVTG…TLGS), 868–900 (GVTG…AVST), 901–933 (GLTG…TVCS), 934–966 (GVTG…AVTT), and 967–999 (GVTG…TVFS). Residues 109-999 (GVASVVDVAK…LMGTKDTVFS (891 aa)) form a 27 X 33 AA approximate tandem repeat region. Positions 1060 to 1083 (PATSWGGLTSSRTTDNGGEQTALS) are enriched in polar residues. 2 disordered regions span residues 1060–1093 (PATS…SGIS) and 1240–1260 (QAPE…EDAA).

It belongs to the perilipin family.

It is found in the cell membrane. The protein localises to the cytoplasm. Its subcellular location is the lipid droplet. Functionally, may play a role in triacylglycerol packaging into adipocytes. May function as a coat protein involved in the biogenesis of lipid droplets. The polypeptide is Perilipin-4 (Homo sapiens (Human)).